A 360-amino-acid chain; its full sequence is DNA replication and repair protein RecF (360 aa).

30–37 is an ATP binding site; sequence GQNGSGKT.

Belongs to the RecF family.

Its subcellular location is the cytoplasm. In terms of biological role, the RecF protein is involved in DNA metabolism; it is required for DNA replication and normal SOS inducibility. RecF binds preferentially to single-stranded, linear DNA. It also seems to bind ATP. In Shewanella putrefaciens (strain CN-32 / ATCC BAA-453), this protein is DNA replication and repair protein RecF.